The sequence spans 231 residues: ATP-dependent dethiobiotin synthetase BioD 2 (231 aa).

ATP is bound at residue 13 to 18; sequence SVGKTV. Thr17 contacts Mg(2+). Lys38 is an active-site residue. Residues Asp55, 112 to 115, 172 to 173, 201 to 203, and Gln208 contribute to the ATP site; these read EGTG, NR, and PYL. Residues Asp55 and Glu112 each contribute to the Mg(2+) site.

Belongs to the dethiobiotin synthetase family. Homodimer. It depends on Mg(2+) as a cofactor.

Its subcellular location is the cytoplasm. The catalysed reaction is (7R,8S)-7,8-diammoniononanoate + CO2 + ATP = (4R,5S)-dethiobiotin + ADP + phosphate + 3 H(+). The protein operates within cofactor biosynthesis; biotin biosynthesis; biotin from 7,8-diaminononanoate: step 1/2. In terms of biological role, catalyzes a mechanistically unusual reaction, the ATP-dependent insertion of CO2 between the N7 and N8 nitrogen atoms of 7,8-diaminopelargonic acid (DAPA, also called 7,8-diammoniononanoate) to form a ureido ring. The sequence is that of ATP-dependent dethiobiotin synthetase BioD 2 from Salmonella typhi.